A 220-amino-acid polypeptide reads, in one-letter code: Splicing factor U2AF 26 kDa subunit (220 aa).

At A2 the chain carries N-acetylalanine. The C3H1-type 1 zinc finger occupies 12 to 40; sequence EKDKVNCSFYFKIGVCRHGDRCSRLHNKP. An RRM domain is found at 65–147; that stretch reads SHCHVSDVEV…QAVHGELSPV (83 aa). Residues 149 to 176 form a C3H1-type 2 zinc finger; it reads DFRESCCRQYEMGECTRGGFCNFMHLRP. The segment at 185–220 is disordered; sequence LYGRGPRRRSPPRFHTGHHPRERNHRCSPDHWHGRF. Residues 189 to 208 are compositionally biased toward basic residues; it reads GPRRRSPPRFHTGHHPRERN. Positions 209–220 are enriched in basic and acidic residues; it reads HRCSPDHWHGRF.

This sequence belongs to the splicing factor SR family. In terms of assembly, interacts with GFI1, U2AF2 and C1QBP. In terms of tissue distribution, isoform 2 is widely expressed. Isoform 3 is highly expressed in heart, brain and lung, lower expressed in thymus and much lower expressed in peripheral blood leukocytes.

Its subcellular location is the nucleus. It is found in the nucleus speckle. The protein resides in the cytoplasm. Its function is as follows. RNA-binding protein that function as a pre-mRNA splicing factor. Plays a critical role in both constitutive and enhancer-dependent splicing by mediating protein-protein interactions and protein-RNA interactions required for accurate 3'-splice site selection. Acts by enhancing the binding of U2AF2 to weak pyrimidine tracts. Also participates in the regulation of alternative pre-mRNA splicing. Activates exon 5 skipping of PTPRC during T-cell activation; an event reversed by GFI1. Binds to RNA at the AG dinucleotide at the 3'-splice site. Shows a preference for AGC or AGA. This is Splicing factor U2AF 26 kDa subunit (U2AF1L4) from Homo sapiens (Human).